A 256-amino-acid polypeptide reads, in one-letter code: Small ribosomal subunit protein eS1 (256 aa).

A2 carries the N-acetylalanine; partial modification.

This sequence belongs to the eukaryotic ribosomal protein eS1 family. As to quaternary structure, component of the small ribosomal subunit. Mature ribosomes consist of a small (40S) and a large (60S) subunit. The 40S subunit contains about 33 different proteins and 1 molecule of RNA (18S). The 60S subunit contains about 49 different proteins and 3 molecules of RNA (25S, 5.8S and 5S).

The protein localises to the cytoplasm. This Eremothecium gossypii (strain ATCC 10895 / CBS 109.51 / FGSC 9923 / NRRL Y-1056) (Yeast) protein is Small ribosomal subunit protein eS1.